Consider the following 302-residue polypeptide: Putative RING-H2 finger protein ATL35 (302 aa).

Positions 1–31 (MTIFARDLIYRIETKVLLPLFLVHLLPYVTC) are cleaved as a signal peptide. A helical membrane pass occupies residues 50–70 (TVIAIIVLAIFISLSMVACFL). An RING-type; atypical zinc finger spans residues 123–165 (CAICLSEFVDKETLRWMPPCSHTFHANCIDVWLSSQSTCPACR). Residue Ser-226 is modified to Phosphoserine.

Belongs to the RING-type zinc finger family. ATL subfamily.

It localises to the membrane. The catalysed reaction is S-ubiquitinyl-[E2 ubiquitin-conjugating enzyme]-L-cysteine + [acceptor protein]-L-lysine = [E2 ubiquitin-conjugating enzyme]-L-cysteine + N(6)-ubiquitinyl-[acceptor protein]-L-lysine.. It participates in protein modification; protein ubiquitination. This is Putative RING-H2 finger protein ATL35 (ATL35) from Arabidopsis thaliana (Mouse-ear cress).